A 225-amino-acid chain; its full sequence is Uracil-DNA glycosylase 1 (225 aa).

Aspartate 68 (proton acceptor) is an active-site residue.

The protein belongs to the uracil-DNA glycosylase (UDG) superfamily. UNG family.

The protein resides in the cytoplasm. It catalyses the reaction Hydrolyzes single-stranded DNA or mismatched double-stranded DNA and polynucleotides, releasing free uracil.. Excises uracil residues from the DNA which can arise as a result of misincorporation of dUMP residues by DNA polymerase or due to deamination of cytosine. This chain is Uracil-DNA glycosylase 1 (ung1), found in Streptomyces avermitilis (strain ATCC 31267 / DSM 46492 / JCM 5070 / NBRC 14893 / NCIMB 12804 / NRRL 8165 / MA-4680).